A 342-amino-acid chain; its full sequence is Serine/threonine-protein kinase-transforming protein mos (342 aa).

Positions 63–338 constitute a Protein kinase domain; sequence VCLMHRLGSG…LLQRDLKAFR (276 aa). ATP contacts are provided by residues 69 to 77 and lysine 90; that span reads LGSGGFGSV. The active-site Proton acceptor is the aspartate 198.

Belongs to the protein kinase superfamily. Ser/Thr protein kinase family.

The catalysed reaction is L-seryl-[protein] + ATP = O-phospho-L-seryl-[protein] + ADP + H(+). It catalyses the reaction L-threonyl-[protein] + ATP = O-phospho-L-threonyl-[protein] + ADP + H(+). This chain is Serine/threonine-protein kinase-transforming protein mos (V-MOS), found in Myeloproliferative sarcoma virus (isolate ts159).